Consider the following 165-residue polypeptide: Protein C2-DOMAIN ABA-RELATED 8 (165 aa).

An N-acetylmethionine modification is found at M1. The C2 domain occupies 1 to 106 (MENLVGLLRI…QGTDIQELTN (106 aa)). Ca(2+) contacts are provided by R21, D22, D27, D73, K74, D75, and D81.

The protein belongs to the plant CAR protein family. Binds to PYR/PYL/RCAR abscisic acid intracellular receptors in an ABA-independent manner, both at the plasma membrane and in the nucleus.

Its subcellular location is the cell membrane. The protein resides in the nucleus. Its function is as follows. Stimulates the GTPase/ATPase activities of Obg-like ATPases. Mediates the transient calcium-dependent interaction of PYR/PYL/RCAR abscisic acid (ABA) receptors with the plasma membrane and thus regulates ABA sensitivity. This chain is Protein C2-DOMAIN ABA-RELATED 8, found in Arabidopsis thaliana (Mouse-ear cress).